An 80-amino-acid polypeptide reads, in one-letter code: Raniseptin-2 (80 aa).

An N-terminal signal peptide occupies residues 1 to 22 (MAFLKKSLFLVLFLGIVSLSIC). Positions 23–49 (EEEKRVGEEEEKQEEENEELSEEELRE) are excised as a propeptide. The segment at 27–46 (RVGEEEEKQEEENEELSEEE) is disordered. The segment covering 30-44 (EEEEKQEEENEELSE) has biased composition (acidic residues).

It belongs to the frog skin active peptide (FSAP) family. Dermaseptin subfamily. As to expression, expressed by the skin glands.

It is found in the secreted. Functionally, has antibacterial activity. The protein is Raniseptin-2 of Boana raniceps (Chaco tree frog).